Reading from the N-terminus, the 72-residue chain is Translation initiation factor IF-1 (72 aa).

An S1-like domain is found at 1 to 72 (MSKEEAIEVE…TRGRITYRAK (72 aa)).

It belongs to the IF-1 family. Component of the 30S ribosomal translation pre-initiation complex which assembles on the 30S ribosome in the order IF-2 and IF-3, IF-1 and N-formylmethionyl-tRNA(fMet); mRNA recruitment can occur at any time during PIC assembly.

The protein localises to the cytoplasm. In terms of biological role, one of the essential components for the initiation of protein synthesis. Stabilizes the binding of IF-2 and IF-3 on the 30S subunit to which N-formylmethionyl-tRNA(fMet) subsequently binds. Helps modulate mRNA selection, yielding the 30S pre-initiation complex (PIC). Upon addition of the 50S ribosomal subunit IF-1, IF-2 and IF-3 are released leaving the mature 70S translation initiation complex. This Geotalea uraniireducens (strain Rf4) (Geobacter uraniireducens) protein is Translation initiation factor IF-1.